Here is a 198-residue protein sequence, read N- to C-terminus: Ribonuclease HII (198 aa).

Positions 10-198 (QLVAGVDEVG…PVKRALGLAS (189 aa)) constitute an RNase H type-2 domain. A divalent metal cation contacts are provided by aspartate 16, glutamate 17, and aspartate 108.

The protein belongs to the RNase HII family. Mn(2+) is required as a cofactor. Requires Mg(2+) as cofactor.

Its subcellular location is the cytoplasm. The enzyme catalyses Endonucleolytic cleavage to 5'-phosphomonoester.. Its function is as follows. Endonuclease that specifically degrades the RNA of RNA-DNA hybrids. This is Ribonuclease HII from Shigella dysenteriae serotype 1 (strain Sd197).